The sequence spans 311 residues: tRNA-cytidine(32) 2-sulfurtransferase (311 aa).

Residues 58-63 (SGGKDS) carry the PP-loop motif motif. [4Fe-4S] cluster contacts are provided by cysteine 133, cysteine 136, and cysteine 224.

This sequence belongs to the TtcA family. Homodimer. The cofactor is Mg(2+). It depends on [4Fe-4S] cluster as a cofactor.

The protein resides in the cytoplasm. The enzyme catalyses cytidine(32) in tRNA + S-sulfanyl-L-cysteinyl-[cysteine desulfurase] + AH2 + ATP = 2-thiocytidine(32) in tRNA + L-cysteinyl-[cysteine desulfurase] + A + AMP + diphosphate + H(+). It participates in tRNA modification. In terms of biological role, catalyzes the ATP-dependent 2-thiolation of cytidine in position 32 of tRNA, to form 2-thiocytidine (s(2)C32). The sulfur atoms are provided by the cysteine/cysteine desulfurase (IscS) system. The protein is tRNA-cytidine(32) 2-sulfurtransferase of Polaromonas sp. (strain JS666 / ATCC BAA-500).